The chain runs to 392 residues: Protein O-glucosyltransferase 1 (392 aa).

The first 23 residues, 1 to 23 (MELGVSSQLWLWLLLLLLPPVPG), serve as a signal peptide directing secretion. Intrachain disulfides connect Cys49–Cys56, Cys54–Cys357, Cys102–Cys108, and Cys263–Cys286. Residue Asn53 is glycosylated (N-linked (GlcNAc...) asparagine). Residues 103 to 107 (MFPSR) form an interaction with the consensus sequence C-X-S-X-[PA]-C in peptide substrates region. The active-site Proton donor/acceptor is Asp133. Residues 172–178 (AVWPIYP) form an interaction with the consensus sequence C-X-S-X-[PA]-C in peptide substrates region. Tyr177 provides a ligand contact to UDP-alpha-D-glucose. N-linked (GlcNAc...) asparagine glycosylation is present at Asn204. Residues Ser212, Arg218, and 274–279 (VAASFR) each bind UDP-alpha-D-glucose. Asn373 is a glycosylation site (N-linked (GlcNAc...) asparagine). The short motif at 389-392 (KIEL) is the Prevents secretion from ER element.

Belongs to the glycosyltransferase 90 family.

It is found in the endoplasmic reticulum lumen. The enzyme catalyses L-seryl-[EGF-like domain protein] + UDP-alpha-D-xylose = 3-O-(beta-D-xylosyl)-L-seryl-[EGF-like domain protein] + UDP + H(+). It catalyses the reaction L-seryl-[EGF-like domain protein] + UDP-alpha-D-glucose = 3-O-(beta-D-glucosyl)-L-seryl-[EGF-like domain protein] + UDP + H(+). The protein operates within protein modification; protein glycosylation. In terms of biological role, dual specificity glycosyltransferase that catalyzes the transfer of glucose and xylose from UDP-glucose and UDP-xylose, respectively, to a serine residue found in the consensus sequence of C-X-S-X-P-C. Specifically targets extracellular EGF repeats of protein such as CRB2, F7, F9 and NOTCH2. Acts as a positive regulator of Notch signaling by mediating O-glucosylation of Notch, leading to regulate muscle development. Notch glucosylation does not affect Notch ligand binding. Required during early development to promote gastrulation: acts by mediating O-glucosylation of CRB2, which is required for CRB2 localization to the cell membrane. The protein is Protein O-glucosyltransferase 1 (POGLUT1) of Bos taurus (Bovine).